A 151-amino-acid polypeptide reads, in one-letter code: Macrodomain Ter protein (151 aa).

This sequence belongs to the MatP family. As to quaternary structure, homodimer.

It localises to the cytoplasm. Its function is as follows. Required for spatial organization of the terminus region of the chromosome (Ter macrodomain) during the cell cycle. Prevents early segregation of duplicated Ter macrodomains during cell division. Binds specifically to matS, which is a 13 bp signature motif repeated within the Ter macrodomain. The protein is Macrodomain Ter protein of Cronobacter sakazakii (strain ATCC BAA-894) (Enterobacter sakazakii).